A 290-amino-acid chain; its full sequence is 4-hydroxybenzoate octaprenyltransferase (290 aa).

8 helical membrane-spanning segments follow: residues 33–53 (LAALWVAADGFPGWHLLAVFV), 91–111 (LGVREAALVGVVLTLVAFVLV), 116–136 (WEAVAWSVPAVLFTILYPFTK), 138–158 (FFAMPQAFLGIAFNFGIVIAF), 165–185 (VPATAWVLWLANLFLVLAYDT), 212–232 (VAAIMGFFVLCLGLTAWVLAP), 237–257 (WPLWLGLGVAAAQVAWHFTLI), and 269–289 (FSKSHWIGAAIFAGVALGYLL).

It belongs to the UbiA prenyltransferase family. Mg(2+) is required as a cofactor.

It localises to the cell inner membrane. It catalyses the reaction all-trans-octaprenyl diphosphate + 4-hydroxybenzoate = 4-hydroxy-3-(all-trans-octaprenyl)benzoate + diphosphate. The protein operates within cofactor biosynthesis; ubiquinone biosynthesis. Functionally, catalyzes the prenylation of para-hydroxybenzoate (PHB) with an all-trans polyprenyl group. Mediates the second step in the final reaction sequence of ubiquinone-8 (UQ-8) biosynthesis, which is the condensation of the polyisoprenoid side chain with PHB, generating the first membrane-bound Q intermediate 3-octaprenyl-4-hydroxybenzoate. This Acidovorax ebreus (strain TPSY) (Diaphorobacter sp. (strain TPSY)) protein is 4-hydroxybenzoate octaprenyltransferase.